A 300-amino-acid polypeptide reads, in one-letter code: Probable alpha-L-glutamate ligase (300 aa).

The 184-residue stretch at 104 to 287 (LQLLARQGID…IAGRMIQWIE (184 aa)) folds into the ATP-grasp domain. Residues Lys-141, 178–179 (EY), Asp-187, and 211–213 (RSN) each bind ATP. The Mg(2+) site is built by Asp-248, Glu-260, and Asn-262. Residues Asp-248, Glu-260, and Asn-262 each coordinate Mn(2+).

Belongs to the RimK family. Requires Mg(2+) as cofactor. Mn(2+) is required as a cofactor.

The protein is Probable alpha-L-glutamate ligase of Citrobacter koseri (strain ATCC BAA-895 / CDC 4225-83 / SGSC4696).